The primary structure comprises 447 residues: Tektin-4 (447 aa).

2 coiled-coil regions span residues 69 to 144 (ADRD…ALDA) and 304 to 423 (FGRR…TNSL). Residues 72–81 (DQSERQRHES) are compositionally biased toward basic and acidic residues. Positions 72 to 104 (DQSERQRHESQQLAAETEALAQRTQQDSTRKVG) are disordered. A compositionally biased stretch (low complexity) spans 82-97 (QQLAAETEALAQRTQQ).

It belongs to the tektin family. In terms of assembly, microtubule inner protein component of sperm flagellar doublet microtubules. In terms of processing, ubiquitinated, leading to its degradation. Deubiquitinated by USP16, promoting its stability. As to expression, expressed in trachea multiciliated cells.

The protein resides in the cytoplasm. Its subcellular location is the cytoskeleton. It localises to the cilium axoneme. The protein localises to the flagellum axoneme. In terms of biological role, microtubule inner protein (MIP) part of the dynein-decorated doublet microtubules (DMTs) in cilia and flagellar axoneme. Forms filamentous polymers in the walls of ciliary and flagellar microtubules. Contributes to normal sperm motility. The sequence is that of Tektin-4 (TEKT4) from Bos taurus (Bovine).